A 42-amino-acid polypeptide reads, in one-letter code: Serine/threonine-protein phosphatase 5 (42 aa).

The required for autoinhibition stretch occupies residues 38–42 (QLGVM).

It belongs to the PPP phosphatase family. PP-5 (PP-T) subfamily. As to quaternary structure, probably forms a complex composed of chaperones HSP90 and HSP70, co-chaperones STIP1/HOP, CDC37, PPP5C, PTGES3/p23, TSC1 and client protein TSC2. Probably forms a complex composed of chaperones HSP90 and HSP70, co-chaperones CDC37, PPP5C, TSC1 and client protein TSC2, CDK4, AKT, RAF1 and NR3C1; this complex does not contain co-chaperones STIP1/HOP and PTGES3/p23. Part of a complex with HSP90/HSP90AA1 and steroid receptors. Interacts (via TPR repeats) with HSP90AA1 (via TPR repeat-binding motif) or HSPA1A/HSPA1B; the interaction is direct and activates the phosphatase activity. Dissociates from HSPA1A/HSPA1B and HSP90AA1 in response to arachidonic acid. Interacts with CPNE1 (via VWFA domain). Interacts with CDC16, CDC27. Interacts with KLHDC10 (via the 6 Kelch repeats); inhibits the phosphatase activity on MAP3K5. Interacts with ATM and ATR; both interactions are induced by DNA damage and enhance ATM and ATR kinase activity. Interacts with RAD17; reduced by DNA damage. Interacts with nuclear receptors such as NR3C1/GCR and PPARG (activated by agonist); regulates their transactivation activities. Interacts (via TPR repeats) with S100 proteins S100A1, S100A2, S100A6, S100B and S100P; the interactions are calcium-dependent, strongly activate PPP5C phosphatase activity and compete with HSP90AA1 and MAP3K5 interactions. Interacts with SMAD2 and SMAD3 but not with SMAD1; decreases SMAD3 phosphorylation and protein levels. Interacts (via TPR repeats) with CRY1 and CRY2; the interaction with CRY2 down-regulates the phosphatase activity on CSNK1E. Interacts (via TPR repeats) with the active form of RAC1, GNA12 or GNA13; these interactions activate the phosphatase activity and translocate PPP5C to the cell membrane. Interacts with FLCN. Requires Mg(2+) as cofactor. It depends on Mn(2+) as a cofactor. In terms of processing, activated by at least two different proteolytic cleavages producing a 56 kDa and a 50 kDa form.

The protein localises to the nucleus. The protein resides in the cytoplasm. It localises to the cell membrane. The enzyme catalyses O-phospho-L-seryl-[protein] + H2O = L-seryl-[protein] + phosphate. The catalysed reaction is O-phospho-L-threonyl-[protein] + H2O = L-threonyl-[protein] + phosphate. Its activity is regulated as follows. Autoinhibited. In the autoinhibited state, the TPR domain interacts with the catalytic region and prevents substrate access to the catalytic pocket. Allosterically activated by various polyunsaturated fatty acids, free long-chain fatty-acids and long-chain fatty acyl-CoA esters, arachidonic acid being the most effective activator. HSP90A and probably RAC1, GNA12 and GNA13 can also release the autoinhibition by the TPR repeat. Activation by RAC1, GNA12 and GNA13 is synergistic with the one produced by fatty acids binding. Inhibited by okadaic acid. Functionally, serine/threonine-protein phosphatase that dephosphorylates a myriad of proteins involved in different signaling pathways including the kinases CSNK1E, ASK1/MAP3K5, PRKDC and RAF1, the nuclear receptors NR3C1, PPARG, ESR1 and ESR2, SMAD proteins and TAU/MAPT. Implicated in wide ranging cellular processes, including apoptosis, differentiation, DNA damage response, cell survival, regulation of ion channels or circadian rhythms, in response to steroid and thyroid hormones, calcium, fatty acids, TGF-beta as well as oxidative and genotoxic stresses. Participates in the control of DNA damage response mechanisms such as checkpoint activation and DNA damage repair through, for instance, the regulation ATM/ATR-signaling and dephosphorylation of PRKDC and TP53BP1. Inhibits ASK1/MAP3K5-mediated apoptosis induced by oxidative stress. Plays a positive role in adipogenesis, mainly through the dephosphorylation and activation of PPARG transactivation function. Also dephosphorylates and inhibits the anti-adipogenic effect of NR3C1. Regulates the circadian rhythms, through the dephosphorylation and activation of CSNK1E. May modulate TGF-beta signaling pathway by the regulation of SMAD3 phosphorylation and protein expression levels. Dephosphorylates and may play a role in the regulation of TAU/MAPT. Through their dephosphorylation, may play a role in the regulation of ions channels such as KCNH2. Dephosphorylate FNIP1, disrupting interaction with HSP90AA1/Hsp90. The polypeptide is Serine/threonine-protein phosphatase 5 (PPP5C) (Oryctolagus cuniculus (Rabbit)).